Reading from the N-terminus, the 316-residue chain is 4-hydroxy-3-methylbut-2-enyl diphosphate reductase (316 aa).

C12 lines the [4Fe-4S] cluster pocket. Residues H41 and H74 each coordinate (2E)-4-hydroxy-3-methylbut-2-enyl diphosphate. Positions 41 and 74 each coordinate dimethylallyl diphosphate. The isopentenyl diphosphate site is built by H41 and H74. C96 is a binding site for [4Fe-4S] cluster. H124 serves as a coordination point for (2E)-4-hydroxy-3-methylbut-2-enyl diphosphate. H124 provides a ligand contact to dimethylallyl diphosphate. Isopentenyl diphosphate is bound at residue H124. E126 (proton donor) is an active-site residue. T167 contributes to the (2E)-4-hydroxy-3-methylbut-2-enyl diphosphate binding site. Residue C197 participates in [4Fe-4S] cluster binding. (2E)-4-hydroxy-3-methylbut-2-enyl diphosphate is bound by residues S225, S226, N227, and S269. Positions 225, 226, 227, and 269 each coordinate dimethylallyl diphosphate. Isopentenyl diphosphate-binding residues include S225, S226, N227, and S269.

The protein belongs to the IspH family. As to quaternary structure, homodimer. The cofactor is [4Fe-4S] cluster.

It carries out the reaction isopentenyl diphosphate + 2 oxidized [2Fe-2S]-[ferredoxin] + H2O = (2E)-4-hydroxy-3-methylbut-2-enyl diphosphate + 2 reduced [2Fe-2S]-[ferredoxin] + 2 H(+). The catalysed reaction is dimethylallyl diphosphate + 2 oxidized [2Fe-2S]-[ferredoxin] + H2O = (2E)-4-hydroxy-3-methylbut-2-enyl diphosphate + 2 reduced [2Fe-2S]-[ferredoxin] + 2 H(+). The protein operates within isoprenoid biosynthesis; dimethylallyl diphosphate biosynthesis; dimethylallyl diphosphate from (2E)-4-hydroxy-3-methylbutenyl diphosphate: step 1/1. It participates in isoprenoid biosynthesis; isopentenyl diphosphate biosynthesis via DXP pathway; isopentenyl diphosphate from 1-deoxy-D-xylulose 5-phosphate: step 6/6. Its function is as follows. Catalyzes the conversion of 1-hydroxy-2-methyl-2-(E)-butenyl 4-diphosphate (HMBPP) into a mixture of isopentenyl diphosphate (IPP) and dimethylallyl diphosphate (DMAPP). Acts in the terminal step of the DOXP/MEP pathway for isoprenoid precursor biosynthesis. This is 4-hydroxy-3-methylbut-2-enyl diphosphate reductase from Klebsiella pneumoniae (strain 342).